Consider the following 345-residue polypeptide: tRNA pseudouridine synthase B (345 aa).

Residues 1 to 33 (MGGNSQPHQEPRRVNNDPRAKQQKGNQVRRDRR) form a disordered region. Residues 9–20 (QEPRRVNNDPRA) show a composition bias toward basic and acidic residues. Aspartate 72 acts as the Nucleophile in catalysis.

It belongs to the pseudouridine synthase TruB family. Type 1 subfamily.

The catalysed reaction is uridine(55) in tRNA = pseudouridine(55) in tRNA. In terms of biological role, responsible for synthesis of pseudouridine from uracil-55 in the psi GC loop of transfer RNAs. The polypeptide is tRNA pseudouridine synthase B (Bradyrhizobium diazoefficiens (strain JCM 10833 / BCRC 13528 / IAM 13628 / NBRC 14792 / USDA 110)).